Here is a 370-residue protein sequence, read N- to C-terminus: 3,7-dimethylxanthine N-methyltransferase CkTbS (370 aa).

Residue Tyr-24 coordinates S-adenosyl-L-homocysteine. Residue Thr-31 coordinates theobromine. 6 residues coordinate S-adenosyl-L-homocysteine: Cys-67, Asn-72, Asp-104, Leu-105, Ser-139, and Phe-140. 3 residues coordinate theobromine: Tyr-157, His-160, and Trp-161. Asn-178 contacts Mg(2+). His-226 is a theobromine binding site. Residues Asp-264, Phe-266, and Asn-267 each coordinate Mg(2+). Phe-322 is a theobromine binding site.

It belongs to the methyltransferase superfamily. Type-7 methyltransferase family. Requires Mg(2+) as cofactor.

It carries out the reaction 7-methylxanthine + S-adenosyl-L-methionine = theobromine + S-adenosyl-L-homocysteine + H(+). It functions in the pathway alkaloid biosynthesis. Involved in the biosynthesis of caffeine in cv. Puer. Involved in the biosynthesis of theacrine in cv. Kucha, a caffeine-like xanthine alkaloid with diverse beneficial biological activities including anti-depressive, sedative, and hypnotic activities, improving learning and memory, increasing exercise activity, and preventing nonalcoholic fatty liver disease. Catalyzes the conversion of 7-methylxanthine (7mX) to theobromine but not able to convert paraxanthine to caffeine. The chain is 3,7-dimethylxanthine N-methyltransferase CkTbS from Camellia sinensis var. assamica (Assam tea).